A 130-amino-acid polypeptide reads, in one-letter code: Small ribosomal subunit protein uS9 (130 aa).

This sequence belongs to the universal ribosomal protein uS9 family.

This chain is Small ribosomal subunit protein uS9, found in Edwardsiella ictaluri (strain 93-146).